The primary structure comprises 122 residues: Transcription initiation factor IIA subunit 2 (122 aa).

2 positions are modified to phosphoserine: Ser-95 and Ser-102.

The protein belongs to the TFIIA subunit 2 family. In terms of assembly, TFIIA is a heterodimer composed of the large TOA1 and a small TOA2 subunits. Interacts with TBP. Interacts with TAF11. Interacts with KAP122.

It is found in the cytoplasm. The protein resides in the nucleus. Its function is as follows. TFIIA is a component of the transcription machinery of RNA polymerase II and plays an important role in transcriptional activation. TFIIA in a complex with TBP mediates transcriptional activity. This is Transcription initiation factor IIA subunit 2 (TOA2) from Saccharomyces cerevisiae (strain ATCC 204508 / S288c) (Baker's yeast).